Here is a 72-residue protein sequence, read N- to C-terminus: Gas vesicle protein A (72 aa).

This sequence belongs to the gas vesicle GvpA family. In terms of assembly, the gas vesicle shell is 2 nm thick and consists of a single layer of this protein. It forms helical ribs nearly perpendicular to the long axis of the vesicle.

Its subcellular location is the gas vesicle shell. Its function is as follows. Gas vesicles are hollow, gas filled proteinaceous nanostructures found in some microorganisms. During planktonic growth they allow positioning of the organism at a favorable depth for light or nutrient acquisition. GvpA forms the protein shell. The protein is Gas vesicle protein A of Pseudanabaena galeata (strain PCC 6901).